Consider the following 143-residue polypeptide: Nucleoside diphosphate kinase (143 aa).

ATP is bound by residues lysine 11, phenylalanine 59, arginine 87, threonine 93, arginine 104, and asparagine 114. The Pros-phosphohistidine intermediate role is filled by histidine 117.

It belongs to the NDK family. In terms of assembly, homotetramer. Mg(2+) serves as cofactor.

It is found in the cytoplasm. The enzyme catalyses a 2'-deoxyribonucleoside 5'-diphosphate + ATP = a 2'-deoxyribonucleoside 5'-triphosphate + ADP. It carries out the reaction a ribonucleoside 5'-diphosphate + ATP = a ribonucleoside 5'-triphosphate + ADP. Major role in the synthesis of nucleoside triphosphates other than ATP. The ATP gamma phosphate is transferred to the NDP beta phosphate via a ping-pong mechanism, using a phosphorylated active-site intermediate. This chain is Nucleoside diphosphate kinase, found in Clostridium perfringens (strain ATCC 13124 / DSM 756 / JCM 1290 / NCIMB 6125 / NCTC 8237 / Type A).